A 342-amino-acid polypeptide reads, in one-letter code: Nucleoid-associated protein Sfri_2491 (342 aa).

This sequence belongs to the YejK family.

Its subcellular location is the cytoplasm. It is found in the nucleoid. This is Nucleoid-associated protein Sfri_2491 from Shewanella frigidimarina (strain NCIMB 400).